Consider the following 420-residue polypeptide: Imidazolonepropionase (420 aa).

Residues H77 and H79 each coordinate Fe(3+). 2 residues coordinate Zn(2+): H77 and H79. 3 residues coordinate 4-imidazolone-5-propanoate: R86, Y149, and H182. Residue Y149 coordinates N-formimidoyl-L-glutamate. Fe(3+) is bound at residue H245. H245 lines the Zn(2+) pocket. E248 provides a ligand contact to 4-imidazolone-5-propanoate. D319 contributes to the Fe(3+) binding site. D319 contacts Zn(2+). N321 lines the N-formimidoyl-L-glutamate pocket.

Belongs to the metallo-dependent hydrolases superfamily. HutI family. Zn(2+) is required as a cofactor. The cofactor is Fe(3+).

The protein localises to the cytoplasm. It carries out the reaction 4-imidazolone-5-propanoate + H2O = N-formimidoyl-L-glutamate. Its pathway is amino-acid degradation; L-histidine degradation into L-glutamate; N-formimidoyl-L-glutamate from L-histidine: step 3/3. Its function is as follows. Catalyzes the hydrolytic cleavage of the carbon-nitrogen bond in imidazolone-5-propanoate to yield N-formimidoyl-L-glutamate. It is the third step in the universal histidine degradation pathway. This Haloarcula marismortui (strain ATCC 43049 / DSM 3752 / JCM 8966 / VKM B-1809) (Halobacterium marismortui) protein is Imidazolonepropionase.